The primary structure comprises 654 residues: Chaperone protein HtpG (654 aa).

An a; substrate-binding region spans residues M1 to R344. Positions E345–R556 are b. The segment at L557–S654 is c.

This sequence belongs to the heat shock protein 90 family. As to quaternary structure, homodimer.

Its subcellular location is the cytoplasm. Molecular chaperone. Has ATPase activity. The protein is Chaperone protein HtpG of Myxococcus xanthus (strain DK1622).